An 864-amino-acid chain; its full sequence is MDQTTHDASAYDFTAAEARWQAAWEARNCFATADAPQGGRRKCYVLEMFPYPSGKIHMGHVRNYAIGDVIARARRAQGYDVLHPMGWDAFGLPAENAARERNVDPAKWTRDNIAAMKADLKRVGLSVDWSREFATCDPEYYGHQQKLFLDLWRAGLAYRRESAVNWDPVDMTVLANEQVIDGRGWKSGAPVEKRKLRQWFFRITDFAADLLAGLDTLENWPERVRTMQRNWIGRSEGAEFTIRLAAPCGGIESVPVYSTRPDTLFGMSFVALAPDHPLATAVAAANPEAAAFIAECQSAGTSEAAIEAAEKRGFDTGLRVVHPFDPSRTHPVWIANFVLMDYGTGAIFGCPAHDQRDLDFARKYGLDVTVVVAPKDDPGLAVGDVAFTGDGVIVNSGFLDGLDVAAAKSRAIAELESRGAGKGVVNWRLRDWGVSRQRAWGCPIPMIHCEVCGTVPVPEKDLPVRLPDDLPFDRPGNALDHHPSWKHVACPQCGAAAQRETDTFDTFVDSSWYFARFCAPHAPVPADPAATSHWMPVDHYIGGIEHAILHLLYARFFTRAMHRLGQVGVAEPFAGLFTQGMLTHESYRTEDGKWLYPEEVIRHADHATTLDGRKVIVGPIEKMSKSKRNTVDPSAVIARFGADTARWFVLSDNPPERDVEWTEAGAQGAFRYVQRLYRLARSVAADRADDVALERAEGEARKLRQATHRTIAAVTEAIDGFAFNVAIARLYELANAIAETEGRDAPGLPAARREAMSALIRLAAPIIPHVAEEANAQVSPEAGLVVNQPWPVAEPELLKRDSVTLAVQIMGKLRGTIELPPGADAETAIAAAMAEPRIAQLLEGATIVKRIHVPDRIVNFVVRP.

The 'HIGH' region motif lies at 50-60; it reads PYPSGKIHMGH. A 'KMSKS' region motif is present at residues 622–626; that stretch reads KMSKS. Lysine 625 lines the ATP pocket.

Belongs to the class-I aminoacyl-tRNA synthetase family.

Its subcellular location is the cytoplasm. It carries out the reaction tRNA(Leu) + L-leucine + ATP = L-leucyl-tRNA(Leu) + AMP + diphosphate. The polypeptide is Leucine--tRNA ligase (Acidiphilium cryptum (strain JF-5)).